The sequence spans 280 residues: MIKAKKHFGQNFLQDKATLDKIIQAIPKDVENVVEIGPGLGDLTFRLLQIYKTTSFEIDRELFQILKVKFANEIQNGQLKLFCKDALEQWQQEGGLSSENYFLVANLPYYVATKMILNAIDDEKCLGLIVMIQKEVALKFSAKSKDKEFSALSILASLQGRCELLFDVDAKLFNPPPKVTSSVIKLQKTKKIFGKDGIFKDAKQYEAFKAFLRAAFASPRKTLLKNLSTNFDKKALEEIFENMNLATNLRPHELDVDSYLKIFEITKEDNERQKRRESCN.

Residues Asn11, Leu13, Gly37, Glu57, Asp85, and Asn106 each coordinate S-adenosyl-L-methionine.

This sequence belongs to the class I-like SAM-binding methyltransferase superfamily. rRNA adenine N(6)-methyltransferase family. RsmA subfamily.

The protein resides in the cytoplasm. It carries out the reaction adenosine(1518)/adenosine(1519) in 16S rRNA + 4 S-adenosyl-L-methionine = N(6)-dimethyladenosine(1518)/N(6)-dimethyladenosine(1519) in 16S rRNA + 4 S-adenosyl-L-homocysteine + 4 H(+). Its function is as follows. Specifically dimethylates two adjacent adenosines (A1518 and A1519) in the loop of a conserved hairpin near the 3'-end of 16S rRNA in the 30S particle. May play a critical role in biogenesis of 30S subunits. This chain is Ribosomal RNA small subunit methyltransferase A, found in Campylobacter concisus (strain 13826).